We begin with the raw amino-acid sequence, 193 residues long: Cytidylate kinase (193 aa).

Gly12 to Thr20 lines the ATP pocket.

The protein belongs to the cytidylate kinase family. Type 2 subfamily.

The protein localises to the cytoplasm. The enzyme catalyses CMP + ATP = CDP + ADP. It carries out the reaction dCMP + ATP = dCDP + ADP. This Thermococcus sibiricus (strain DSM 12597 / MM 739) protein is Cytidylate kinase.